The chain runs to 431 residues: Phosphomethylpyrimidine synthase (431 aa).

Residues N66, M95, Y124, H163, 185–187 (SRG), 226–229 (DGLR), and E265 each bind substrate. H269 serves as a coordination point for Zn(2+). Y292 is a substrate binding site. H333 provides a ligand contact to Zn(2+). [4Fe-4S] cluster contacts are provided by C408, C411, and C415.

The protein belongs to the ThiC family. It depends on [4Fe-4S] cluster as a cofactor.

The enzyme catalyses 5-amino-1-(5-phospho-beta-D-ribosyl)imidazole + S-adenosyl-L-methionine = 4-amino-2-methyl-5-(phosphooxymethyl)pyrimidine + CO + 5'-deoxyadenosine + formate + L-methionine + 3 H(+). Its pathway is cofactor biosynthesis; thiamine diphosphate biosynthesis. In terms of biological role, catalyzes the synthesis of the hydroxymethylpyrimidine phosphate (HMP-P) moiety of thiamine from aminoimidazole ribotide (AIR) in a radical S-adenosyl-L-methionine (SAM)-dependent reaction. This chain is Phosphomethylpyrimidine synthase, found in Dehalococcoides mccartyi (strain CBDB1).